The chain runs to 1948 residues: Chromodomain-helicase-DNA-binding protein 5 (1948 aa).

Disordered regions lie at residues 1 to 136 (MRGP…SGQL), 228 to 268 (SPQQ…GRGK), and 281 to 336 (SKRK…GDGY). Acidic residues-rich tracts occupy residues 17–37 (EEME…EGFE) and 71–89 (NDEL…ESEG). Basic residues-rich tracts occupy residues 95–114 (TKKK…KRKK) and 250–268 (GVRK…GRGK). The segment covering 289–299 (SEEDEPEDSDL) has biased composition (acidic residues). A compositionally biased stretch (basic residues) spans 319–328 (KKNKRRRKKK). PHD-type zinc fingers lie at residues 341-388 (QDYC…CEKE) and 414-461 (MEFC…CTCP). Residues 341-651 (QDYCEVCQQG…HRELMLGEDA (311 aa)) form a histone-binding region. Positions 495 to 552 (MPPPRPLEGIPEREFFVKWAGLSYWHCSWVKELQLELYHTVMYRNYQRKNDMDEPPPF) constitute a Chromo 1 domain. The tract at residues 547–569 (DEPPPFDYGSGDEDGKSEKRKNK) is disordered. Positions 559–569 (EDGKSEKRKNK) are enriched in basic and acidic residues. The region spanning 590–651 (MMVHRILNHS…HRELMLGEDA (62 aa)) is the Chromo 2 domain. A Helicase ATP-binding domain is found at 710 to 894 (RFSWAQGTDT…FHLLNFLTPE (185 aa)). 723–730 (DEMGLGKT) provides a ligand contact to ATP. The DEAH box signature appears at 845–848 (DEAH). One can recognise a Helicase C-terminal domain in the interval 1026–1191 (LLQKMLKKLR…MTKQELDDIL (166 aa)). Disordered stretches follow at residues 1206–1250 (MMSQ…VEDS), 1349–1409 (YNDA…LPPL), 1521–1566 (KYST…LPDK), and 1595–1692 (TALD…EDKN). Composition is skewed to acidic residues over residues 1353-1364 (SQEDQEWQDELS) and 1374-1383 (SEDEDEDFEE). An N5-methylglutamine modification is found at Gln1388. Over residues 1547-1561 (TPVPASPAQLPPAPL) the composition is skewed to pro residues. Ser1552 carries the post-translational modification Phosphoserine. Composition is skewed to basic and acidic residues over residues 1598 to 1625 (DRVE…EVEK), 1633 to 1650 (PLKE…DKLE), and 1657 to 1672 (NDFR…KEPT).

The protein belongs to the SNF2/RAD54 helicase family. In terms of assembly, component of the nucleosome remodeling and deacetylase (NuRD) repressor complex, composed of core proteins MTA1, MTA2, MTA3, RBBP4, RBBP7, HDAC1, HDAC2, MBD2, MBD3, and peripherally associated proteins CDK2AP1, CDK2AP2, GATAD2A, GATAD2B, CHD3, CHD4 and CHD5. The exact stoichiometry of the NuRD complex is unknown, and some subunits such as MBD2 and MBD3, GATAD2A and GATAD2B, and CHD3, CHD4 and CHD5 define mutually exclusive NuRD complexes. Interacts with HDAC2. Post-translationally, methylated at Gln-1388 by N6AMT1. In terms of tissue distribution, expressed in brain regions enriched in neurons and not in regions rich in glial cells (at protein level).

Its subcellular location is the nucleus. It is found in the chromosome. It catalyses the reaction ATP + H2O = ADP + phosphate + H(+). ATP-dependent chromatin-remodeling factor that binds DNA through histones and regulates gene transcription. May specifically recognize and bind trimethylated 'Lys-27' (H3K27me3) and non-methylated 'Lys-4' of histone H3. Acts as a component of the histone deacetylase NuRD complex which participates in the remodeling of chromatin. Plays a role in the development of the nervous system by activating the expression of genes promoting neuron terminal differentiation. In parallel, it may also positively regulate the trimethylation of histone H3 at 'Lys-27' thereby specifically repressing genes that promote the differentiation into non-neuronal cell lineages. Regulates the expression of genes involved in cell proliferation and differentiation. Downstream activated genes may include CDKN2A that positively regulates the p53/TP53 pathway, which in turn, prevents cell proliferation. In spermatogenesis, it probably regulates histone hyperacetylation and the replacement of histones by transition proteins in chromatin, a crucial step in the condensation of spermatid chromatin and the production of functional spermatozoa. This chain is Chromodomain-helicase-DNA-binding protein 5 (Chd5), found in Rattus norvegicus (Rat).